The primary structure comprises 369 residues: MFNVRQLIATTLLLSCAFAAQAERLKDIASISGVRSNQLIGYGLVVGLNGTGDQTTQTPFTLQTFNNMLSQFGIKVPAGSGNVQLKNVAAVSVHADLPPFAKPGQVVDITVSSIGNSKSLRGGSLLMTPLKGIDGNVYAIAQGNLVVGGFDAEGRDGSKITVNVPSAGRIPGGASVERAVPSGFNQGNTLTLNLNRPDFTTAKRIVDKVNDLLGPGVAQAVDGGSVRVSAPMDPSQRVDYLSILENLEIDPGQAVAKVIINSRTGTIVIGQNVKVSPAAVTHGSLTVTITEDPIVSQPGAFSNGQTAVVPRSRVNAEQEAKPMFKFGPGTTLDEIVRAVNQVGAAPGDLMAILEALKQAGALQADLIVI.

Residues 1–22 (MFNVRQLIATTLLLSCAFAAQA) form the signal peptide.

Belongs to the FlgI family. In terms of assembly, the basal body constitutes a major portion of the flagellar organelle and consists of four rings (L,P,S, and M) mounted on a central rod.

Its subcellular location is the periplasm. It localises to the bacterial flagellum basal body. In terms of biological role, assembles around the rod to form the L-ring and probably protects the motor/basal body from shearing forces during rotation. In Pseudomonas putida (strain ATCC 47054 / DSM 6125 / CFBP 8728 / NCIMB 11950 / KT2440), this protein is Flagellar P-ring protein.